We begin with the raw amino-acid sequence, 519 residues long: Transketolase, chloroplastic (519 aa).

Mg(2+) is bound at residue Asp-11. Residues Gly-12 and Asn-41 each contribute to the thiamine diphosphate site. Asn-41 and Ile-43 together coordinate Mg(2+). His-118 serves as a coordination point for thiamine diphosphate. His-118, Arg-212, and Ser-239 together coordinate substrate. 2 residues coordinate thiamine diphosphate: Glu-266 and Phe-293. The Proton donor role is filled by Glu-266. The substrate site is built by His-317, Asp-325, and Arg-376.

This sequence belongs to the transketolase family. As to quaternary structure, homodimer. The cofactor is Mg(2+). Ca(2+) serves as cofactor. It depends on Mn(2+) as a cofactor. Requires Co(2+) as cofactor. Thiamine diphosphate is required as a cofactor. In terms of tissue distribution, constitutively expressed in leaves and roots.

Its subcellular location is the plastid. It localises to the chloroplast. It catalyses the reaction D-sedoheptulose 7-phosphate + D-glyceraldehyde 3-phosphate = aldehydo-D-ribose 5-phosphate + D-xylulose 5-phosphate. Its function is as follows. Catalyzes the transfer of a two-carbon ketol group from a ketose donor to an aldose acceptor, via a covalent intermediate with the cofactor thiamine pyrophosphate. This Craterostigma plantagineum (Blue gem) protein is Transketolase, chloroplastic (TKT3).